The following is a 226-amino-acid chain: 2-C-methyl-D-erythritol 4-phosphate cytidylyltransferase (226 aa).

The protein belongs to the IspD/TarI cytidylyltransferase family. IspD subfamily.

It catalyses the reaction 2-C-methyl-D-erythritol 4-phosphate + CTP + H(+) = 4-CDP-2-C-methyl-D-erythritol + diphosphate. Its pathway is isoprenoid biosynthesis; isopentenyl diphosphate biosynthesis via DXP pathway; isopentenyl diphosphate from 1-deoxy-D-xylulose 5-phosphate: step 2/6. Functionally, catalyzes the formation of 4-diphosphocytidyl-2-C-methyl-D-erythritol from CTP and 2-C-methyl-D-erythritol 4-phosphate (MEP). The protein is 2-C-methyl-D-erythritol 4-phosphate cytidylyltransferase of Bacillus cereus (strain ATCC 10987 / NRS 248).